We begin with the raw amino-acid sequence, 651 residues long: Transcription termination factor FttA (651 aa).

The tract at residues 1 to 200 is archaeal CPSF-KH domain; that stretch reads MTFLIKRETQ…ITGLGGFREV (200 aa). A KHa region spans residues 12 to 79; the sequence is DQILRDIRAV…ISVRPDPEVL (68 aa). Positions 80 to 147 are KHb; sequence LPPEEAEKLI…WAPKVVRTPP (68 aa). The segment at 188-398 is metallo-beta-lactamase N-terminus; sequence WIRITGLGGF…LVMESTYGGA (211 aa). Positions 256, 258, 260, 261, 344, and 367 each coordinate Zn(2+). The segment at 399–592 is beta-Casp; the sequence is NDIQMPREEA…MEVHTIDGFS (194 aa). The metallo-beta-lactamase C-terminus stretch occupies residues 593–651; that stretch reads GHADRRELMNYVAKVRPRPERIITVHGEPQKCLDLATSIHRKFGISTRAPNNLDTIRLR. His618 provides a ligand contact to Zn(2+).

Belongs to the metallo-beta-lactamase superfamily. RNA-metabolizing metallo-beta-lactamase-like family. FttA subfamily. As to quaternary structure, homodimer. Interacts with RNA polymerase (RNAP), interacts with the Spt4-Spt5 complex. Zn(2+) is required as a cofactor.

Terminates transcription on the whole genome. Termination is linked to FttA-mediated RNA cleavage and does not require NTP hydrolysis. Cleaves endonucleolytically at the RNA exit channel of RNA polymerase (RNAP); the 5'-3' exonuclease activity of this protein degrades the nascent RNA released from RNAP. In terms of biological role, has nuclease activity on single-stranded RNA. The sequence is that of Transcription termination factor FttA from Pyrococcus horikoshii (strain ATCC 700860 / DSM 12428 / JCM 9974 / NBRC 100139 / OT-3).